The primary structure comprises 142 residues: Hemoglobin subunit alpha (142 aa).

The 141-residue stretch at valine 2 to arginine 142 folds into the Globin domain. A Phosphoserine modification is found at serine 4. An N6-succinyllysine modification is found at lysine 8. Threonine 9 carries the post-translational modification Phosphothreonine. Position 12 is an N6-succinyllysine (lysine 12). Lysine 17 is subject to N6-acetyllysine; alternate. Position 17 is an N6-succinyllysine; alternate (lysine 17). Residue tyrosine 25 is modified to Phosphotyrosine. Residue serine 36 is modified to Phosphoserine. Lysine 41 bears the N6-succinyllysine mark. Residue serine 50 is modified to Phosphoserine. Histidine 59 contacts O2. Residue histidine 88 participates in heme b binding. Serine 103 is modified (phosphoserine). A Phosphothreonine modification is found at threonine 109. A phosphoserine mark is found at serine 125 and serine 132. Threonine 135 bears the Phosphothreonine mark. Phosphoserine is present on serine 139.

This sequence belongs to the globin family. Heterotetramer of two alpha chains and two beta chains. In terms of tissue distribution, red blood cells.

Functionally, involved in oxygen transport from the lung to the various peripheral tissues. Hemopressin acts as an antagonist peptide of the cannabinoid receptor CNR1. Hemopressin-binding efficiently blocks cannabinoid receptor CNR1 and subsequent signaling. The sequence is that of Hemoglobin subunit alpha (HBA) from Antrozous pallidus (Pallid bat).